Consider the following 701-residue polypeptide: DC-STAMP domain-containing protein 2 (701 aa).

4 helical membrane-spanning segments follow: residues 15–35 (TCGF…ELLG), 40–60 (PFGC…GMGF), 82–102 (LLLL…NTLQ), and 215–235 (FPHL…LASL). 2 N-linked (GlcNAc...) asparagine glycosylation sites follow: Asn-272 and Asn-284. Helical transmembrane passes span 310–330 (ALSL…IQAL) and 404–424 (LLIM…LDLA). N-linked (GlcNAc...) asparagine glycosylation occurs at Asn-468. The helical transmembrane segment at 488 to 508 (YIVIGTMYGLCFFVTLFGSYV) threads the bilayer. The segment at 673–701 (LQEALGTNLSDKSTSKPERAGNRNQDRKQ) is disordered. The span at 685 to 701 (STSKPERAGNRNQDRKQ) shows a compositional bias: basic and acidic residues.

In terms of assembly, interacts with DCST1. Expressed in testis.

The protein localises to the cytoplasmic vesicle. It localises to the secretory vesicle. It is found in the acrosome membrane. Its function is as follows. Essential sperm cell-surface protein required for sperm-egg fusion and fertilization. The sequence is that of DC-STAMP domain-containing protein 2 from Mus musculus (Mouse).